A 344-amino-acid polypeptide reads, in one-letter code: N,N-dimethyltransferase OxyT (344 aa).

S-adenosyl-L-methionine is bound by residues aspartate 205 and 231 to 233; that span reads GDF.

This sequence belongs to the class I-like SAM-binding methyltransferase superfamily. Cation-independent O-methyltransferase family.

It catalyses the reaction 4-amino-4-dedimethylamino-anhydrotetracycline + S-adenosyl-L-methionine = 4-methylamino-4-dedimethylamino-anhydrotetracycline + S-adenosyl-L-homocysteine + H(+). It carries out the reaction 4-methylamino-4-dedimethylamino-anhydrotetracycline + S-adenosyl-L-methionine = anhydrotetracycline + S-adenosyl-L-homocysteine + H(+). The protein operates within antibiotic biosynthesis; oxytetracycline biosynthesis. Functionally, involved in the biosynthesis of the tetracycline antibiotic, oxytetracycline. Catalyzes the dimethylation of 4-amino-4-de(dimethylamino)anhydrotetracycline (4-amino-ATC) to yield anhydrotetracycline (ATC). Also able to catalyze the dimethylation of 7-chloro-, 6-demethyl-, 2-decarboxamido-2-nitrile-, and 4-methylamino-derivatives of 4-amino-4-de(dimethylamino)anhydrotetracycline. The sequence is that of N,N-dimethyltransferase OxyT from Streptomyces rimosus.